The chain runs to 335 residues: Proline racemase (335 aa).

The active-site Proton acceptor is Cys91. The active-site Proton donor is the Cys256.

The protein belongs to the proline racemase family.

It carries out the reaction L-proline = D-proline. With respect to regulation, inhibited by pyrrole-2-carboxylate in vitro. Functionally, catalyzes the reversible interconversion of L- and D-proline. Likely functions as the proline racemase necessary for D-proline generation in order to discriminate it from the L-proline used for protein synthesis. This chain is Proline racemase, found in Acetoanaerobium sticklandii (strain ATCC 12662 / DSM 519 / JCM 1433 / CCUG 9281 / NCIMB 10654 / HF) (Clostridium sticklandii).